Reading from the N-terminus, the 470-residue chain is L-fuculokinase (470 aa).

It belongs to the FGGY kinase family. It depends on a divalent metal cation as a cofactor.

It catalyses the reaction L-fuculose + ATP = L-fuculose 1-phosphate + ADP + H(+). It participates in carbohydrate degradation; L-fucose degradation; L-lactaldehyde and glycerone phosphate from L-fucose: step 2/3. Functionally, catalyzes the phosphorylation of L-fuculose. This is L-fuculokinase from Haemophilus influenzae (strain ATCC 51907 / DSM 11121 / KW20 / Rd).